Consider the following 216-residue polypeptide: MLAPEARGDLIHFTENTRDAMETFFNSYDLAEYSEVNPNKLNRKETDELLGVIRERFKSELVITDEDFVKHLAFALIRAANITTSVKVNYVGAYEYTIGGKKFLVKDAWVFPLIKECMKKFNKPNPVRTFCATFEDAYIVIARSLPKLFLNRTIGKRGIPSGYEFLGADFLTATSVCLNDHEKAIVLQASRAAIDRAVSSSVDGKIVSLFDLGRLS.

It is found in the virion. Functionally, component that constitutes the tail found at one end of the virion. Together with Hsp70h and p64, encapsidates the 5'-terminal portion of the viral genome. Movement protein that is involved in local cell-cell movement via plamodesmata. At least five viral proteins, CP, CPm, p6, p64 and Hsp70h are essential for cell-cell movement. The protein is Minor capsid protein of Beet yellows virus (isolate Ukraine) (BYV).